The primary structure comprises 518 residues: MDMAFVEVCLRMLLVFVLSWTIFHVNNRKKKKATKLADLATEERKEGGPDVIIVGAGVGGSALAYALAKDGRRVHVIERDMREPVRMMGEFMQPGGRLMLSKLGLQDCLEEIDAQKSTGIRLFKDGKETVACFPVDTNFPYEPSGRFFHNGRFVQRLRQKASSLPNVRLEEGTVRSLIEEKGVVKGVTYKNSSGEETTSFAPLTVVCDGCHSNLRRSLNDNNAEVTAYEIGYISRNCRLEQPDKLHLIMAKPSFAMLYQVSSTDVRCNFELLSKNLPSVSNGEMTSFVRNSIAPQVPLKLRKTFLKGLDEGSHIKITQAKRIPATLSRKKGVIVLGDAFNMRHPVIASGMMVLLSDILILSRLLKPLGNLGDENKVSEVMKSFYALRKPMSATVNTLGNSFWQVLIASTDEAKEAMRQGCFDYLSSGGFRTSGLMALIGGMNPRPLSLFYHLFVISLSSIGQLLSPFPTPLRVWHSLRLLDLSLKMLVPHLKAEGIGQMLSPTNAAAYRKSYMAATVV.

2 helical membrane passes run 3–23 and 48–68; these read MAFV…WTIF and GPDV…YALA. FAD-binding positions include 58–59, 78–79, R86, F91, R158, V174, D337, and M350; these read VG and ER. Residues 448–468 traverse the membrane as a helical segment; that stretch reads LFYHLFVISLSSIGQLLSPFP.

This sequence belongs to the squalene monooxygenase family. The cofactor is FAD.

It is found in the membrane. It carries out the reaction squalene + reduced [NADPH--hemoprotein reductase] + O2 = (S)-2,3-epoxysqualene + oxidized [NADPH--hemoprotein reductase] + H2O + H(+). It participates in terpene metabolism; lanosterol biosynthesis; lanosterol from farnesyl diphosphate: step 2/3. Its function is as follows. Catalyzes the stereospecific oxidation of squalene to (S)-2,3-epoxysqualene, and is considered to be a rate-limiting enzyme in steroid biosynthesis. The sequence is that of Squalene monooxygenase 1,2 (SQP1,2) from Brassica napus (Rape).